Reading from the N-terminus, the 512-residue chain is MANPNLKQVNIQNNATFPHQQNVTRSTESPGDPKETMEAVAPSPQDPSSANSEPQEMTVDIKNFRRPGEKTFTQRCRLFVGNLPSDMADEDFKKLFFKYGDAKEVFINRDRGFGFIRLETRTLAEIAKAELDGTVLGNRPIRIRFATHGAALTVRNLSPVVSNELLEQAFSQFGPVERAIVIVDDRGRPTGKGIVEFANKPAARKALDHCADGALLLTTSPRPVILEPTEQYDDEDGLPEKLLQKSAQYHKEREHKPHFAQPGTFEFEYSSRWKALDEMDKQQREQVERNIQEAKEKLETEMEAAKQEHQLMMMRQDLMRRQEELRRLEELRNQELQKRKQIELRHEEERRRREEDMIRHREQLDIRRQPDGFKSGFMESREQDMRMNEMGTRGAINIGDSFNPVTAISGNQGPTQMMGMGGRVGAMGPDGSSKMIPDNGVMPNERFSEGGPLQMGSPVGGQTGVDSPQPQQHSPMLVGAGSVPGVLGQSGFGRGSPVGGSFDGPNNKRRRY.

2 stretches are compositionally biased toward polar residues: residues 1–29 (MANP…STES) and 46–55 (DPSSANSEPQ). Positions 1 to 56 (MANPNLKQVNIQNNATFPHQQNVTRSTESPGDPKETMEAVAPSPQDPSSANSEPQE) are disordered. RRM domains lie at 76-148 (CRLF…FATH) and 150-231 (AALT…PTEQ). Residues 276–366 (LDEMDKQQRE…MIRHREQLDI (91 aa)) adopt a coiled-coil conformation. Positions 451–512 (GPLQMGSPVG…DGPNNKRRRY (62 aa)) are disordered. A compositionally biased stretch (polar residues) spans 464–474 (GVDSPQPQQHS). Over residues 488-502 (GQSGFGRGSPVGGSF) the composition is skewed to gly residues.

It belongs to the PSPC family.

It localises to the nucleus speckle. In terms of biological role, RNA-binding protein required for the formation of nuclear paraspeckles. Binds to poly(A), poly(G) and poly(U) RNA homopolymers. The sequence is that of Paraspeckle component 1 (pspc1) from Danio rerio (Zebrafish).